The primary structure comprises 35 residues: MSDIN-like toxin proprotein 8 (35 aa).

Residues 1–10 constitute a propeptide that is removed on maturation; that stretch reads MSDINATRLP. A cross-link (cyclopeptide (Phe-Pro)) is located at residues 11–18; it reads FVFVASPP. Residues 19–35 constitute a propeptide that is removed on maturation; the sequence is CVGDDIAMVLTRGENLC.

The protein belongs to the MSDIN fungal toxin family. Processed by the macrocyclase-peptidase enzyme POPB to yield a toxic cyclic octapeptide. POPB first removes 10 residues from the N-terminus. Conformational trapping of the remaining peptide forces the enzyme to release this intermediate rather than proceed to macrocyclization. The enzyme rebinds the remaining peptide in a different conformation and catalyzes macrocyclization of the N-terminal 8 residues. As to expression, expressed in basidiocarps.

Probable toxin that belongs to the MSDIN-like toxin family responsible for a large number of food poisoning cases and deaths. The protein is MSDIN-like toxin proprotein 8 of Amanita exitialis (Guangzhou destroying angel).